A 98-amino-acid polypeptide reads, in one-letter code: NADH-ubiquinone oxidoreductase chain 4L (98 aa).

3 helical membrane-spanning segments follow: residues 2 to 22, 29 to 49, and 61 to 81; these read PSIS…MLIF, SLLC…LTIL, and ILLL…LVTV.

The protein belongs to the complex I subunit 4L family. In terms of assembly, core subunit of respiratory chain NADH dehydrogenase (Complex I) which is composed of 45 different subunits.

Its subcellular location is the mitochondrion inner membrane. The catalysed reaction is a ubiquinone + NADH + 5 H(+)(in) = a ubiquinol + NAD(+) + 4 H(+)(out). Core subunit of the mitochondrial membrane respiratory chain NADH dehydrogenase (Complex I) which catalyzes electron transfer from NADH through the respiratory chain, using ubiquinone as an electron acceptor. Part of the enzyme membrane arm which is embedded in the lipid bilayer and involved in proton translocation. This is NADH-ubiquinone oxidoreductase chain 4L (MT-ND4L) from Eulemur coronatus (Crowned lemur).